Here is a 281-residue protein sequence, read N- to C-terminus: Glycerol uptake facilitator protein (281 aa).

Topologically, residues 1-5 (MSQTS) are cytoplasmic. Residues 6 to 34 (TLKGQCIAEFLGTGLLIFFGVGCVAALKV) form a helical membrane-spanning segment. Residues 35–39 (AGASF) are Periplasmic-facing. A helical membrane pass occupies residues 40–60 (GQWEISVIWGLGVAMAIYLTA). Topologically, residues 61-63 (GVS) are cytoplasmic. An intramembrane segment occupies 64–67 (GAHL). The NPA 1 signature appears at 68 to 70 (NPA). Positions 68-78 (NPAVTIALWLF) form an intramembrane region, helical. Residues 79-84 (ACFDKR) are Cytoplasmic-facing. Residues 85-108 (KVIPFIVSQVAGAFCAAALVYGLY) traverse the membrane as a helical segment. The Periplasmic segment spans residues 109–143 (YNLFFDFEQTHHIVRGSVESVDLAGTFSTYPNPHI). The helical transmembrane segment at 144-169 (NFVQAFAVEMVITAILMGLILALTDD) threads the bilayer. Residues 170-177 (GNGVPRGP) lie on the Cytoplasmic side of the membrane. The chain crosses the membrane as a helical span at residues 178-194 (LAPLLIGLLIAVIGASM). The Periplasmic segment spans residues 195–198 (GPLT). An intramembrane segment occupies 199-202 (GFAM). An NPA 2 motif is present at residues 203–205 (NPA). Positions 203 to 216 (NPARDFGPKVFAWL) form an intramembrane region, helical. Residues 217 to 231 (AGWGNVAFTGGRDIP) lie on the Periplasmic side of the membrane. A helical transmembrane segment spans residues 232–254 (YFLVPLFSPIVGAIVGAFAYRKL). The Cytoplasmic segment spans residues 255–281 (IGRHLPCDICVVEEKETTTPSEQKASL).

This sequence belongs to the MIP/aquaporin (TC 1.A.8) family. As to quaternary structure, homotetramer.

It localises to the cell inner membrane. It carries out the reaction glycerol(in) = glycerol(out). Its function is as follows. Mediates glycerol diffusion across the cytoplasmic membrane via a pore-type mechanism. The protein is Glycerol uptake facilitator protein (glpF) of Shigella flexneri.